A 279-amino-acid chain; its full sequence is Urease accessory protein UreD (279 aa).

It belongs to the UreD family. UreD, UreF and UreG form a complex that acts as a GTP-hydrolysis-dependent molecular chaperone, activating the urease apoprotein by helping to assemble the nickel containing metallocenter of UreC. The UreE protein probably delivers the nickel.

The protein localises to the cytoplasm. In terms of biological role, required for maturation of urease via the functional incorporation of the urease nickel metallocenter. The protein is Urease accessory protein UreD of Streptococcus thermophilus (strain ATCC BAA-250 / LMG 18311).